Here is a 190-residue protein sequence, read N- to C-terminus: Threonylcarbamoyl-AMP synthase (190 aa).

The 184-residue stretch at 7–190 folds into the YrdC-like domain; sequence SEAVAHAVAV…ALTGELFRQG (184 aa).

This sequence belongs to the SUA5 family. TsaC subfamily.

The protein resides in the cytoplasm. It carries out the reaction L-threonine + hydrogencarbonate + ATP = L-threonylcarbamoyladenylate + diphosphate + H2O. In terms of biological role, required for the formation of a threonylcarbamoyl group on adenosine at position 37 (t(6)A37) in tRNAs that read codons beginning with adenine. Catalyzes the conversion of L-threonine, HCO(3)(-)/CO(2) and ATP to give threonylcarbamoyl-AMP (TC-AMP) as the acyladenylate intermediate, with the release of diphosphate. This is Threonylcarbamoyl-AMP synthase from Klebsiella pneumoniae subsp. pneumoniae (strain ATCC 700721 / MGH 78578).